A 2025-amino-acid polypeptide reads, in one-letter code: E3 ubiquitin-protein ligase TTC3 (2025 aa).

An interaction with POLG region spans residues 1 to 230 (MDNFAEGDFT…TQSCMDCIEE (230 aa)). 2 TPR repeats span residues 231 to 264 (GELM…RPEN) and 266 to 298 (LLYG…KNTW). The residue at position 378 (Ser-378) is a Phosphoserine; by PKB/AKT2. The segment at 423-458 (DCHPEFSPPSSQPPKHKGKQKSRNNESEKFSSSSPL) is disordered. 2 TPR repeats span residues 536–572 (VLVV…YPSE) and 576–609 (CLAY…IYRL). The interval 786-805 (ERMEEDLRESNPPKNEEQKE) is disordered. A compositionally biased stretch (basic and acidic residues) spans 793–805 (RESNPPKNEEQKE). At Ser-1009 the chain carries Phosphoserine. Disordered regions lie at residues 1012–1068 (APFS…GPFA), 1215–1295 (KPDV…SCNS), 1773–1842 (DPSV…SPKK), and 1894–1944 (ILDE…QKAE). Basic residues predominate over residues 1019–1029 (VKNKSKKKKPK). A compositionally biased stretch (polar residues) spans 1038–1052 (SGTTSVTSNNEIITS). Phosphoserine is present on Ser-1061. Over residues 1894 to 1912 (ILDEQKKKKPNPGKDKRTY) the composition is skewed to basic and acidic residues. Residues 1913-1928 (EPSSATPVTRSSQGSP) show a composition bias toward polar residues. The segment at 1957 to 1997 (CEICHEVFKSKNVRVLKCGHKYHKGCFKQWLKGQSACPACQ) adopts an RING-type zinc-finger fold. A disordered region spans residues 2004-2025 (EESPSGRGWPSQNQELPSCSSR). Residues 2013 to 2025 (PSQNQELPSCSSR) show a composition bias toward polar residues.

In terms of assembly, interacts (when phosphorylated on Ser-378) with AKT1, AKT2 and AKT3 (when phosphorylated). Interacts with CIT. Interacts with POLG. Interacts with HSP70. Interacts with SMURF2. Phosphorylation on Ser-378 by Akt is required for ubiquitin ligase activity. In terms of processing, proteolytically cleaved into differently sized N- and C-terminal fragments. Found in all tissues examined.

The protein localises to the nucleus. It is found in the cytoplasm. The protein resides in the golgi apparatus. It catalyses the reaction S-ubiquitinyl-[E2 ubiquitin-conjugating enzyme]-L-cysteine + [acceptor protein]-L-lysine = [E2 ubiquitin-conjugating enzyme]-L-cysteine + N(6)-ubiquitinyl-[acceptor protein]-L-lysine.. It participates in protein modification; protein ubiquitination. Functionally, E3 ubiquitin-protein ligase which catalyzes the formation of 'Lys-48'-polyubiquitin chains. Mediates the ubiquitination and subsequent degradation of phosphorylated Akt (AKT1, AKT2 and AKT3) in the nucleus. Acts as a terminal regulator of Akt signaling after activation; its phosphorylation by Akt, which is a prerequisite for ubiquitin ligase activity, suggests the existence of a regulation mechanism required to control Akt levels after activation. Positively regulates TGFB1-induced epithelial-mesenchymal transition and myofibroblast differentiation by mediating the ubiquitination and subsequent degradation of SMURF2. Regulates neuronal differentiation by regulating actin remodeling and Golgi organization via a signaling cascade involving RHOA, CIT and ROCK. Inhibits cell proliferation. The protein is E3 ubiquitin-protein ligase TTC3 (TTC3) of Homo sapiens (Human).